A 261-amino-acid polypeptide reads, in one-letter code: MNFREKYGQWGIVLGATEGIGKASAFELAKRGMDVILVGRRKEALEELAKAIHEETGKEIRVLPQDLSEYDAAERLIEATKDLDMGVIEYVACLHAMGQYNKVDYAKYEQMYRVNIRTFSKLLHHYIGEFKERDRGAFITIGSLSGWTSLPFCAEYAAEKAYMMTVTEGVAYECANTNVDVMLLSAGSTITPTWLKNKPSDPKAVAAAMYPEDVIKDGFEQLGKKFTYLAGELNREKMKENNAMDRNDLIAKLGKMFDHMA.

Residues 17 to 21 (TEGIG), 40 to 41 (RR), and 66 to 67 (DL) each bind NADP(+). The Proton acceptor role is filled by Y156.

The protein belongs to the short-chain dehydrogenases/reductases (SDR) family. In terms of assembly, homodimer.

The enzyme catalyses a 7beta-hydroxysteroid + NADP(+) = a 7-oxosteroid + NADPH + H(+). It catalyses the reaction ursocholate + NADP(+) = 3alpha,12alpha-dihydroxy-7-oxo-5beta-cholanate + NADPH + H(+). It carries out the reaction 7-oxolithocholate + NADPH + H(+) = ursodeoxycholate + NADP(+). The catalysed reaction is 3alpha,7beta-dihydroxy-12-oxo-5beta-cholan-24-oate + NADP(+) = 7,12-dioxo-lithocholate + NADPH + H(+). The enzyme catalyses 7beta-hydroxy-3,12-dioxo-5beta-cholan-24-oate + NADP(+) = dehydrocholate + NADPH + H(+). In terms of biological role, 7beta-hydroxysteroid dehydrogenase that catalyzes the reduction of the 7-oxo group of 7-oxosteroids, such as 3alpha,12alpha-dihydroxy-7-oxo-5beta-cholanate, 7-oxolithocholate, 7,12-dioxo-lithocholate and dehydrocholate, to the corresponding 7beta-hydroxysteroids. Is also able to catalyze the reverse oxidation reactions. Together with 7alpha-HSDH encoded in the adjacent gene, is likely involved in the epimerization of the hydroxy group at C-7 of primary bile acids through 7-keto bile acid intermediates. In Clostridium sardiniense (Clostridium absonum), this protein is 7beta-hydroxysteroid dehydrogenase.